Here is a 156-residue protein sequence, read N- to C-terminus: Crossover junction endodeoxyribonuclease RuvC (156 aa).

Catalysis depends on residues Asp-7, Glu-66, and Asp-138. Mg(2+) contacts are provided by Asp-7, Glu-66, and Asp-138.

The protein belongs to the RuvC family. In terms of assembly, homodimer which binds Holliday junction (HJ) DNA. The HJ becomes 2-fold symmetrical on binding to RuvC with unstacked arms; it has a different conformation from HJ DNA in complex with RuvA. In the full resolvosome a probable DNA-RuvA(4)-RuvB(12)-RuvC(2) complex forms which resolves the HJ. Mg(2+) is required as a cofactor.

The protein resides in the cytoplasm. The catalysed reaction is Endonucleolytic cleavage at a junction such as a reciprocal single-stranded crossover between two homologous DNA duplexes (Holliday junction).. In terms of biological role, the RuvA-RuvB-RuvC complex processes Holliday junction (HJ) DNA during genetic recombination and DNA repair. Endonuclease that resolves HJ intermediates. Cleaves cruciform DNA by making single-stranded nicks across the HJ at symmetrical positions within the homologous arms, yielding a 5'-phosphate and a 3'-hydroxyl group; requires a central core of homology in the junction. The consensus cleavage sequence is 5'-(A/T)TT(C/G)-3'. Cleavage occurs on the 3'-side of the TT dinucleotide at the point of strand exchange. HJ branch migration catalyzed by RuvA-RuvB allows RuvC to scan DNA until it finds its consensus sequence, where it cleaves and resolves the cruciform DNA. The protein is Crossover junction endodeoxyribonuclease RuvC of Ehrlichia chaffeensis (strain ATCC CRL-10679 / Arkansas).